A 172-amino-acid chain; its full sequence is Adenine phosphoribosyltransferase (172 aa).

This sequence belongs to the purine/pyrimidine phosphoribosyltransferase family. As to quaternary structure, homodimer.

The protein localises to the cytoplasm. It carries out the reaction AMP + diphosphate = 5-phospho-alpha-D-ribose 1-diphosphate + adenine. It participates in purine metabolism; AMP biosynthesis via salvage pathway; AMP from adenine: step 1/1. Catalyzes a salvage reaction resulting in the formation of AMP, that is energically less costly than de novo synthesis. The chain is Adenine phosphoribosyltransferase from Synechococcus sp. (strain CC9605).